The chain runs to 155 residues: Ribosomal RNA large subunit methyltransferase H (155 aa).

S-adenosyl-L-methionine-binding positions include Leu-72, Gly-103, and 122 to 127 (LSDLTL).

It belongs to the RNA methyltransferase RlmH family. As to quaternary structure, homodimer.

The protein resides in the cytoplasm. The catalysed reaction is pseudouridine(1915) in 23S rRNA + S-adenosyl-L-methionine = N(3)-methylpseudouridine(1915) in 23S rRNA + S-adenosyl-L-homocysteine + H(+). Functionally, specifically methylates the pseudouridine at position 1915 (m3Psi1915) in 23S rRNA. The polypeptide is Ribosomal RNA large subunit methyltransferase H (Acidovorax ebreus (strain TPSY) (Diaphorobacter sp. (strain TPSY))).